The following is a 266-amino-acid chain: uncharacterized protein (266 aa).

Residues 112–261 (LEKKIFISHS…KKWERIKAKF (150 aa)) form the TIR domain. The active site involves E192.

It carries out the reaction NAD(+) + H2O = ADP-D-ribose + nicotinamide + H(+). This is an uncharacterized protein from Bacillus subtilis (strain 168).